Reading from the N-terminus, the 273-residue chain is MLITETFHDVQTSYGTTLRIYVYSPKIAGYPQAKFPGVILYSEIYQVTGPVRRFGQRIASEGYVVVAPAIYHNFMGPEALPYDVQGTDIGNEYKIKKPLESYDEDNKLCCDLLFQLPQFDGKRIGSTGMCLGGHLAFRALLDKRVTCATCFFPTDIHSRTLGLGQNDNSLERVSKELGNNQEMVLIFGTADTHVDPQGRDLIRKTLRDHGVKFTFLEILAAQHAFIRDEFSKGRFDSAITQSCLGFLFEQFNRKLRIDLGEFVDDNTPLEHVC.

Catalysis depends on residues cysteine 130, aspartate 191, and histidine 223.

This sequence belongs to the dienelactone hydrolase family.

It catalyses the reaction 2-(5-oxo-2,5-dihydrofuran-2-ylidene)acetate + H2O = 4-oxohex-2-enedioate + H(+). The polypeptide is Putative carboxymethylenebutenolidase (Saccharomyces cerevisiae (strain ATCC 204508 / S288c) (Baker's yeast)).